The chain runs to 411 residues: D-galactonate dehydratase family member SBI_01856 (411 aa).

Substrate-binding residues include Asn-45 and His-130. The active-site Proton donor/acceptor is Tyr-167. Residue Asp-219 participates in Mg(2+) binding. The Proton donor/acceptor role is filled by His-221. 2 residues coordinate Mg(2+): Glu-245 and Glu-271. Substrate is bound by residues Glu-271, Arg-292, His-321, Asp-325, and Glu-348.

This sequence belongs to the mandelate racemase/muconate lactonizing enzyme family. GalD subfamily. Mg(2+) serves as cofactor.

It carries out the reaction D-gluconate = 2-dehydro-3-deoxy-D-gluconate + H2O. Functionally, has low D-gluconate dehydratase activity (in vitro), suggesting that it has no significant role in D-gluconate degradation in vivo. Has no detectable activity with a panel of 70 other acid sugars (in vitro). This chain is D-galactonate dehydratase family member SBI_01856, found in Streptomyces bingchenggensis (strain BCW-1).